Reading from the N-terminus, the 445-residue chain is tRNA modification GTPase MnmE (445 aa).

The (6S)-5-formyl-5,6,7,8-tetrahydrofolate site is built by Arg21, Glu78, and Lys117. The 158-residue stretch at 213–370 (GFRIALVGAP…LKETLSERVV (158 aa)) folds into the TrmE-type G domain. Residues 223–228 (NAGKST), 242–248 (TATPGTT), and 267–270 (DTAG) contribute to the GTP site. Residues Ser227 and Thr248 each coordinate Mg(2+). Lys445 provides a ligand contact to (6S)-5-formyl-5,6,7,8-tetrahydrofolate.

This sequence belongs to the TRAFAC class TrmE-Era-EngA-EngB-Septin-like GTPase superfamily. TrmE GTPase family. Homodimer. Heterotetramer of two MnmE and two MnmG subunits. K(+) is required as a cofactor.

The protein resides in the cytoplasm. Exhibits a very high intrinsic GTPase hydrolysis rate. Involved in the addition of a carboxymethylaminomethyl (cmnm) group at the wobble position (U34) of certain tRNAs, forming tRNA-cmnm(5)s(2)U34. In Phenylobacterium zucineum (strain HLK1), this protein is tRNA modification GTPase MnmE.